The primary structure comprises 191 residues: Adenylate kinase (191 aa).

12–17 contacts ATP; it reads GSGKTT. An NMP region spans residues 34–63; that stretch reads STGDLLRAESAKKTERGLLIEKFTSQGELV. AMP contacts are provided by residues Thr-35, Arg-40, 61-63, 88-91, and Gln-95; these read ELV and GYPR. The tract at residues 130–136 is LID; sequence GRSRGAD. Residue Arg-131 coordinates ATP. Positions 133 and 145 each coordinate AMP. Arg-173 contributes to the ATP binding site.

The protein belongs to the adenylate kinase family. In terms of assembly, monomer.

It localises to the cytoplasm. It carries out the reaction AMP + ATP = 2 ADP. The protein operates within purine metabolism; AMP biosynthesis via salvage pathway; AMP from ADP: step 1/1. Catalyzes the reversible transfer of the terminal phosphate group between ATP and AMP. Plays an important role in cellular energy homeostasis and in adenine nucleotide metabolism. This chain is Adenylate kinase, found in Helicobacter pylori (strain ATCC 700392 / 26695) (Campylobacter pylori).